Consider the following 72-residue polypeptide: Translation initiation factor IF-1 (72 aa).

The S1-like domain occupies 1-72; it reads MAKKDVIELE…TRGRITWRKK (72 aa).

The protein belongs to the IF-1 family. Component of the 30S ribosomal translation pre-initiation complex which assembles on the 30S ribosome in the order IF-2 and IF-3, IF-1 and N-formylmethionyl-tRNA(fMet); mRNA recruitment can occur at any time during PIC assembly.

It is found in the cytoplasm. Functionally, one of the essential components for the initiation of protein synthesis. Stabilizes the binding of IF-2 and IF-3 on the 30S subunit to which N-formylmethionyl-tRNA(fMet) subsequently binds. Helps modulate mRNA selection, yielding the 30S pre-initiation complex (PIC). Upon addition of the 50S ribosomal subunit IF-1, IF-2 and IF-3 are released leaving the mature 70S translation initiation complex. The sequence is that of Translation initiation factor IF-1 from Clostridioides difficile (strain 630) (Peptoclostridium difficile).